Consider the following 215-residue polypeptide: Ran-specific GTPase-activating protein 1 (215 aa).

Basic and acidic residues-rich tracts occupy residues 1–18 (MSAE…EEQK) and 26–35 (VASKQTEEAK). Residues 1-78 (MSAEQEKKTQ…ASPEVHFEPI (78 aa)) are disordered. S70 carries the phosphoserine modification. The 137-residue stretch at 74–210 (HFEPIVKLSA…FEKYQEENAK (137 aa)) folds into the RanBD1 domain.

The protein belongs to the RANBP1 family.

The protein resides in the cytoplasm. Stimulates the GTPase activity in the presence of RNA1. May potentiate the action of RanGAP1 (RNA1), thus playing the role of a negative regulator. The protein is Ran-specific GTPase-activating protein 1 (sbp1) of Schizosaccharomyces pombe (strain 972 / ATCC 24843) (Fission yeast).